The chain runs to 526 residues: Secreted triacylglycerol lipase LIP4 (526 aa).

An N-terminal signal peptide occupies residues 1 to 26 (MVRLSYVRFGVAWCIAIIIVSGFSNA). The N-linked (GlcNAc...) asparagine glycan is linked to Asn186. Catalysis depends on Ser195, which acts as the Nucleophile. Asn228 is a glycosylation site (N-linked (GlcNAc...) asparagine). Residues Asp342 and His376 contribute to the active site. An N-linked (GlcNAc...) asparagine glycan is attached at Asn377. The tract at residues 412–526 (TGPSASSSAG…TMPAPPLMER (115 aa)) is disordered. 2 stretches are compositionally biased toward low complexity: residues 413–423 (GPSASSSAGGP) and 430–457 (TGGHHTQSGSAHGGHSSEHAASSTHAPA). Residue Asn462 is glycosylated (N-linked (GlcNAc...) asparagine). Over residues 480–490 (PSTGATSPAPS) the composition is skewed to low complexity. Residues 516–526 (RTMPAPPLMER) show a composition bias toward pro residues.

Belongs to the AB hydrolase superfamily. Lipase family. Class Lip subfamily.

The protein localises to the secreted. It catalyses the reaction a triacylglycerol + H2O = a diacylglycerol + a fatty acid + H(+). It carries out the reaction a monoacylglycerol + H2O = glycerol + a fatty acid + H(+). The enzyme catalyses a diacylglycerol + H2O = a monoacylglycerol + a fatty acid + H(+). Functionally, secreted lipase that hydrolyzes acylglycerol lipids such as triacylglycerols and consequently releases free fatty acid. Can hydrolyze 4-nitrophenyl palmitate to release 4-nitrophenol and palmitoic acid. Due to an absence of fatty acid synthase genes in Malassezia species, secretory lipases are essential for the yeast to generate free fatty acids from degradation of sebum and assimilate them as lipid sources for growth. Plays important roles not only in lipid metabolism but also in the immune response of host cells and pathogenesis. This Malassezia furfur (Pityriasis versicolor infection agent) protein is Secreted triacylglycerol lipase LIP4.